The primary structure comprises 231 residues: D-allulose-6-phosphate 3-epimerase (231 aa).

S6 is a substrate binding site. Residues H30, D32, and H63 each contribute to the a divalent metal cation site. D32 serves as the catalytic Proton acceptor. Residues H63, G140–G143, D173–S175, and G195–S197 each bind substrate. A divalent metal cation is bound at residue D173. Residue D173 is the Proton donor of the active site.

This sequence belongs to the ribulose-phosphate 3-epimerase family. AlsE subfamily. In terms of assembly, homohexamer. Trimer of dimers. It depends on Co(2+) as a cofactor. Mn(2+) is required as a cofactor. Zn(2+) serves as cofactor.

The catalysed reaction is D-allulose 6-phosphate = keto-D-fructose 6-phosphate. Its pathway is carbohydrate degradation; D-allose degradation. Its function is as follows. Catalyzes the reversible epimerization of D-allulose 6-phosphate to D-fructose 6-phosphate. Can also catalyze with lower efficiency the reversible epimerization of D-ribulose 5-phosphate to D-xylulose 5-phosphate. The polypeptide is D-allulose-6-phosphate 3-epimerase (Escherichia coli (strain K12)).